A 612-amino-acid chain; its full sequence is Glutamine--fructose-6-phosphate aminotransferase [isomerizing] (612 aa).

The active-site Nucleophile; for GATase activity is the C2. Positions 2-217 (CGIVGGVAER…EGDIARLTRD (216 aa)) constitute a Glutamine amidotransferase type-2 domain. SIS domains lie at 283 to 428 (AEAD…VKEQ) and 461 to 602 (LSEL…VDQP). K607 serves as the catalytic For Fru-6P isomerization activity.

As to quaternary structure, homodimer.

The protein localises to the cytoplasm. It catalyses the reaction D-fructose 6-phosphate + L-glutamine = D-glucosamine 6-phosphate + L-glutamate. In terms of biological role, catalyzes the first step in hexosamine metabolism, converting fructose-6P into glucosamine-6P using glutamine as a nitrogen source. The protein is Glutamine--fructose-6-phosphate aminotransferase [isomerizing] of Acinetobacter baylyi (strain ATCC 33305 / BD413 / ADP1).